Consider the following 239-residue polypeptide: Demethylmenaquinone methyltransferase (239 aa).

S-adenosyl-L-methionine-binding positions include threonine 68, aspartate 86, and 111–112 (NG).

This sequence belongs to the class I-like SAM-binding methyltransferase superfamily. MenG/UbiE family.

The catalysed reaction is a 2-demethylmenaquinol + S-adenosyl-L-methionine = a menaquinol + S-adenosyl-L-homocysteine + H(+). It participates in quinol/quinone metabolism; menaquinone biosynthesis; menaquinol from 1,4-dihydroxy-2-naphthoate: step 2/2. Methyltransferase required for the conversion of demethylmenaquinol (DMKH2) to menaquinol (MKH2). This chain is Demethylmenaquinone methyltransferase, found in Tropheryma whipplei (strain TW08/27) (Whipple's bacillus).